A 201-amino-acid polypeptide reads, in one-letter code: CASP-like protein 2D1 (201 aa).

The Cytoplasmic portion of the chain corresponds to 1 to 26; it reads MRSGEGSTAAAAAAEEEKVKVAAPFR. Residues 27–47 form a helical membrane-spanning segment; the sequence is LAELGLRVCAVPLAVASVWEM. Topologically, residues 48-70 are extracellular; it reads ATNKQVDETYGEVRFSDLSGFRY. Residues 71–91 traverse the membrane as a helical segment; the sequence is LVWINAITAAYSVASILLSSC. Topologically, residues 92 to 98 are cytoplasmic; it reads RFITRFD. Residues 99 to 119 form a helical membrane-spanning segment; the sequence is WLIFILDQASAYLLLTSASAA. At 120-148 the chain is on the extracellular side; the sequence is AEVVYLAREGDREVSWGEVCSYFGRFCGA. Residues 149-169 traverse the membrane as a helical segment; it reads ATVSVALNAAALLCFMALSLI. At 170–201 the chain is on the cytoplasmic side; sequence SAFRVFTKFNPPSQSNSKQQLSQEQGKPVVSG. The span at 180-194 shows a compositional bias: polar residues; sequence PPSQSNSKQQLSQEQ. A disordered region spans residues 180–201; the sequence is PPSQSNSKQQLSQEQGKPVVSG.

It belongs to the Casparian strip membrane proteins (CASP) family. Homodimer and heterodimers.

It localises to the cell membrane. This is CASP-like protein 2D1 from Oryza sativa subsp. indica (Rice).